We begin with the raw amino-acid sequence, 1522 residues long: Lysine-specific demethylase 5B (1522 aa).

The JmjN domain occupies 10–51 (CPVFEPSWEEFADPFAFIHKIRPIAEQTGICKVRPPPDWQPP). The region spanning 75-165 (TRVKLNFLDQ…ILYPYNLFQS (91 aa)) is the ARID domain. Over residues 180-192 (DTKDKEYKPHDIP) the composition is skewed to basic and acidic residues. A disordered region spans residues 180–229 (DTKDKEYKPHDIPQRQSVQPSESCPPARRAKRLRAEATNIKTESDSPEVR). The PHD-type 1 zinc-finger motif lies at 284–334 (LYVCLLCGSGNDEDRLLLCDGCDDSYHTFCLIPPLHDVPKGDWRCPQCLAQ). Position 400 (Y400) interacts with 2-oxoglutarate. The JmjC domain occupies 428–594 (EYLDSGWNLN…LGRQCIEHYR (167 aa)). Fe cation is bound by residues H474 and E476. Residues S482, N484, and K492 each contribute to the 2-oxoglutarate site. H562 contacts Fe cation. The segment at 667 to 719 (CYKCKTTCFMSAVYCPCKPGLLVCLYHVEDLCSCPTYQYKLGYRYTLEELYPM) adopts a C5HC2 zinc-finger fold. The PHD-type 2 zinc finger occupies 1151 to 1199 (LKVCVCQKEPAAPMIQCELCRGFFHTGCVSVPHALQGPRVWLCPQCRRS). Residues 1353-1365 (LQAEQKPSVGPSN) show a composition bias toward polar residues. Disordered regions lie at residues 1353-1373 (LQAE…CCRG) and 1400-1460 (ARVR…DSED). Residues 1400 to 1416 (ARVRKMRTPKKKKLKLS) show a composition bias toward basic residues. The segment covering 1426–1442 (RMERERERLLEAQRSSE) has biased composition (basic and acidic residues). The PHD-type 3 zinc-finger motif lies at 1462-1516 (DAICPAVTCLQPEGEEVDWVQCDGSCNQWFHQVCVGISPEMAEKEDYICASCAGK).

Belongs to the JARID1 histone demethylase family. Requires Fe(2+) as cofactor.

It is found in the nucleus. It catalyses the reaction N(6),N(6),N(6)-trimethyl-L-lysyl(4)-[histone H3] + 3 2-oxoglutarate + 3 O2 = L-lysyl(4)-[histone H3] + 3 formaldehyde + 3 succinate + 3 CO2. Histone demethylase that demethylates 'Lys-4' of histone H3, thereby playing a central role in histone code. Does not demethylate histone H3 'Lys-9' or H3 'Lys-27'. Demethylates trimethylated, dimethylated and monomethylated H3 'Lys-4'. Acts as a transcriptional corepressor. May repress the CLOCK-BMAL1 heterodimer-mediated transcriptional activation of the core clock component PER2. The chain is Lysine-specific demethylase 5B (KDM5B) from Gallus gallus (Chicken).